A 367-amino-acid chain; its full sequence is uncharacterized protein (367 aa).

Belongs to the mimivirus L17x/L18x family.

This is an uncharacterized protein from Acanthamoeba polyphaga (Amoeba).